A 145-amino-acid polypeptide reads, in one-letter code: D-aminoacyl-tRNA deacylase (145 aa).

The Gly-cisPro motif, important for rejection of L-amino acids motif lies at 137–138 (GP).

This sequence belongs to the DTD family. As to quaternary structure, homodimer.

It localises to the cytoplasm. It carries out the reaction glycyl-tRNA(Ala) + H2O = tRNA(Ala) + glycine + H(+). The enzyme catalyses a D-aminoacyl-tRNA + H2O = a tRNA + a D-alpha-amino acid + H(+). An aminoacyl-tRNA editing enzyme that deacylates mischarged D-aminoacyl-tRNAs. Also deacylates mischarged glycyl-tRNA(Ala), protecting cells against glycine mischarging by AlaRS. Acts via tRNA-based rather than protein-based catalysis; rejects L-amino acids rather than detecting D-amino acids in the active site. By recycling D-aminoacyl-tRNA to D-amino acids and free tRNA molecules, this enzyme counteracts the toxicity associated with the formation of D-aminoacyl-tRNA entities in vivo and helps enforce protein L-homochirality. This is D-aminoacyl-tRNA deacylase from Brevibacillus brevis (strain 47 / JCM 6285 / NBRC 100599).